A 569-amino-acid chain; its full sequence is 2-succinyl-5-enolpyruvyl-6-hydroxy-3-cyclohexene-1-carboxylate synthase (569 aa).

The protein belongs to the TPP enzyme family. MenD subfamily. In terms of assembly, homodimer. Mg(2+) serves as cofactor. Mn(2+) is required as a cofactor. The cofactor is thiamine diphosphate.

The enzyme catalyses isochorismate + 2-oxoglutarate + H(+) = 5-enolpyruvoyl-6-hydroxy-2-succinyl-cyclohex-3-ene-1-carboxylate + CO2. It functions in the pathway quinol/quinone metabolism; 1,4-dihydroxy-2-naphthoate biosynthesis; 1,4-dihydroxy-2-naphthoate from chorismate: step 2/7. The protein operates within cofactor biosynthesis; phylloquinone biosynthesis. Catalyzes the thiamine diphosphate-dependent decarboxylation of 2-oxoglutarate and the subsequent addition of the resulting succinic semialdehyde-thiamine pyrophosphate anion to isochorismate to yield 2-succinyl-5-enolpyruvyl-6-hydroxy-3-cyclohexene-1-carboxylate (SEPHCHC). The chain is 2-succinyl-5-enolpyruvyl-6-hydroxy-3-cyclohexene-1-carboxylate synthase from Microcystis aeruginosa (strain NIES-843 / IAM M-2473).